The sequence spans 723 residues: tRNA (guanine(27)-N(2))-dimethyltransferase (723 aa).

Residues 1–10 (MENMAEEELL) are compositionally biased toward acidic residues. Residues 1 to 72 (MENMAEEELL…SLASVPEEAE (72 aa)) are disordered. Position 23 is a phosphothreonine (T23). The span at 32–44 (PAADTALDSAPTP) shows a compositional bias: low complexity. Residues 45 to 59 (DSAPAPALAPAPAPA) show a composition bias toward pro residues. Phosphoserine is present on S61. Positions 128–132 (HKLRR) match the Nucleolar localization signal motif. The C2H2-type zinc-finger motif lies at 177–199 (YHCIICSATITRRTDMLGHVKRH). One can recognise a Trm1 methyltransferase domain in the interval 220 to 679 (EVLKETDTDI…ASLTQFKSIL (460 aa)). The S-adenosyl-L-methionine site is built by R253, D300, D348, and A349. Positions 479, 482, 504, and 506 each coordinate Zn(2+). Residue K576 forms a Glycyl lysine isopeptide (Lys-Gly) (interchain with G-Cter in SUMO2) linkage. S603 bears the Phosphoserine mark.

This sequence belongs to the class I-like SAM-binding methyltransferase superfamily. Trm1 family.

It localises to the nucleus. The protein resides in the nucleolus. It carries out the reaction guanosine(27) in tRNA(Tyr) + 2 S-adenosyl-L-methionine = N(2)-dimethylguanosine(27) in tRNA(Tyr) + 2 S-adenosyl-L-homocysteine + 2 H(+). In terms of biological role, specifically dimethylates a single guanine residue at position 27 of tRNA(Tyr) using S-adenosyl-L-methionine as donor of the methyl groups. Dimethylation at position 27 of tRNA(Tyr) is required for efficient translation of tyrosine codons. Also required to maintain 3-(3-amino-3-carboxypropyl)uridine (acp3U) in the D-loop of several cytoplasmic tRNAs. The protein is tRNA (guanine(27)-N(2))-dimethyltransferase of Rattus norvegicus (Rat).